The primary structure comprises 429 residues: uncharacterized protein (429 aa).

Catalysis depends on charge relay system residues Ser116, Asp179, and His206.

It belongs to the AB hydrolase 3 family.

It is found in the cytoplasm. The protein resides in the nucleus. This is an uncharacterized protein from Schizosaccharomyces pombe (strain 972 / ATCC 24843) (Fission yeast).